Reading from the N-terminus, the 386-residue chain is Succinate--CoA ligase [ADP-forming] subunit beta (386 aa).

In terms of domain architecture, ATP-grasp spans 9–244 (KELLKQFGVP…LDEEDPAEIE (236 aa)). Residues lysine 46, 53-55 (GRG), glutamate 99, alanine 102, and glutamate 107 contribute to the ATP site. Asparagine 199 and aspartate 213 together coordinate Mg(2+). Substrate contacts are provided by residues asparagine 264 and 321–323 (GIM).

Belongs to the succinate/malate CoA ligase beta subunit family. In terms of assembly, heterotetramer of two alpha and two beta subunits. Requires Mg(2+) as cofactor.

It catalyses the reaction succinate + ATP + CoA = succinyl-CoA + ADP + phosphate. It carries out the reaction GTP + succinate + CoA = succinyl-CoA + GDP + phosphate. It functions in the pathway carbohydrate metabolism; tricarboxylic acid cycle; succinate from succinyl-CoA (ligase route): step 1/1. In terms of biological role, succinyl-CoA synthetase functions in the citric acid cycle (TCA), coupling the hydrolysis of succinyl-CoA to the synthesis of either ATP or GTP and thus represents the only step of substrate-level phosphorylation in the TCA. The beta subunit provides nucleotide specificity of the enzyme and binds the substrate succinate, while the binding sites for coenzyme A and phosphate are found in the alpha subunit. The polypeptide is Succinate--CoA ligase [ADP-forming] subunit beta (Bordetella petrii (strain ATCC BAA-461 / DSM 12804 / CCUG 43448)).